Here is a 243-residue protein sequence, read N- to C-terminus: Ribonuclease HII (243 aa).

In terms of domain architecture, RNase H type-2 spans 23–217; sequence SVIVGVDEVG…LSSECEGAPP (195 aa). A divalent metal cation contacts are provided by aspartate 29, glutamate 30, and aspartate 122. The segment at 223–243 is disordered; that stretch reads LSSTGIKTPVDGRGDAVATRD. Positions 232-243 are enriched in basic and acidic residues; the sequence is VDGRGDAVATRD.

Belongs to the RNase HII family. Requires Mn(2+) as cofactor. The cofactor is Mg(2+).

The protein resides in the cytoplasm. It carries out the reaction Endonucleolytic cleavage to 5'-phosphomonoester.. Its function is as follows. Endonuclease that specifically degrades the RNA of RNA-DNA hybrids. This Anaplasma marginale (strain St. Maries) protein is Ribonuclease HII.